We begin with the raw amino-acid sequence, 892 residues long: Polyribonucleotide nucleotidyltransferase (892 aa).

The tract at residues 407–427 (YMHNYEMPPYSTGETGRVGSP) is disordered. Residues Asp-521 and Asp-527 each contribute to the Mg(2+) site. One can recognise a KH domain in the interval 587 to 646 (PRIITTTVPVDKIGEVIGPKGKMINQIQEDTGAEIAIEDDGTVYISSEGGEAAEKAKEII). The 73-residue stretch at 658 to 730 (GETYNGKVVK…DRGKISLAIP (73 aa)) folds into the S1 motif domain. A disordered region spans residues 727–892 (LAIPGFEDQE…VRRDFDPFED (166 aa)). 2 stretches are compositionally biased toward basic and acidic residues: residues 739–844 (APRR…DRRS) and 851–877 (RRDD…ERSE).

This sequence belongs to the polyribonucleotide nucleotidyltransferase family. Mg(2+) serves as cofactor.

It is found in the cytoplasm. It carries out the reaction RNA(n+1) + phosphate = RNA(n) + a ribonucleoside 5'-diphosphate. Involved in mRNA degradation. Catalyzes the phosphorolysis of single-stranded polyribonucleotides processively in the 3'- to 5'-direction. This Bifidobacterium adolescentis (strain ATCC 15703 / DSM 20083 / NCTC 11814 / E194a) protein is Polyribonucleotide nucleotidyltransferase.